Reading from the N-terminus, the 888-residue chain is Glutamate receptor 3 (888 aa).

The signal sequence occupies residues 1–22; sequence MGQSVLRAVFFLVLGLLGHSHG. At 23–546 the chain is on the extracellular side; the sequence is GFPNTISIGG…GVFSFLDPLA (524 aa). N-linked (GlcNAc...) asparagine glycans are attached at residues Asn-57, Asn-260, Asn-374, Asn-409, and Asn-416. Cys-85 and Cys-334 are joined by a disulfide. Residues Pro-502, Thr-504, and Arg-509 each coordinate L-glutamate. The chain crosses the membrane as a helical span at residues 547–567; it reads YEIWMCIVFAYIGVSVVLFLV. At 568–596 the chain is on the cytoplasmic side; it reads SRFSPYEWHLEDNNEEPRDPQSPPDPPNE. The helical; Pore-forming intramembrane region spans 597-612; it reads FGIFNSLWFSLGAFMQ. Residues 613–615 lie within the membrane without spanning it; the sequence is QGC. A lipid anchor (S-palmitoyl cysteine) is attached at Cys-615. The Cytoplasmic segment spans residues 616–621; sequence DISPRS. Residues 622–642 traverse the membrane as a helical segment; the sequence is LSGRIVGGVWWFFTLIIISSY. The Extracellular portion of the chain corresponds to 643 to 817; it reads TANLAAFLTV…DKTSALSLSN (175 aa). Positions 680, 681, and 731 each coordinate L-glutamate. Cys-744 and Cys-799 are joined by a disulfide. The chain crosses the membrane as a helical span at residues 818–838; sequence VAGVFYILVGGLGLAMMVALI. At 839–888 the chain is on the cytoplasmic side; that stretch reads EFCYKSRAESKRMKLTKNTQNFKPAPATNTQNYATYREGYNVYGTESVKI. Cys-841 carries the S-palmitoyl cysteine lipid modification. Residues Tyr-871 and Tyr-881 each carry the phosphotyrosine modification.

It belongs to the glutamate-gated ion channel (TC 1.A.10.1) family. GRIA3 subfamily. Homotetramer or heterotetramer of pore-forming glutamate receptor subunits. Tetramers may be formed by the dimerization of dimers. Interacts with PICK1, GRIP1 and GRIP2. Found in a complex with GRIA1, GRIA2, GRIA4, CNIH2, CNIH3, CACNG2, CACNG3, CACNG4, CACNG5, CACNG7 and CACNG8. Interacts with CACNG5. Found in a complex with GRIA1, GRIA2, GRIA4, DLG4, CACNG8 and CNIH2.

Its subcellular location is the cell membrane. It localises to the postsynaptic cell membrane. It is found in the postsynaptic density membrane. It catalyses the reaction Ca(2+)(in) = Ca(2+)(out). Its function is as follows. Ionotropic glutamate receptor that functions as a ligand-gated cation channel, gated by L-glutamate and glutamatergic agonists such as alpha-amino-3-hydroxy-5-methyl-4-isoxazolepropionic acid (AMPA), quisqualic acid, and kainic acid. L-glutamate acts as an excitatory neurotransmitter at many synapses in the central nervous system and plays an important role in fast excitatory synaptic transmission by inducing long-term potentiation. Binding of the excitatory neurotransmitter L-glutamate induces a conformation change, leading to the opening of the cation channel, and thereby converts the chemical signal to an electrical impulse upon entry of calcium. The receptor then desensitizes rapidly and enters a transient inactive state, characterized by the presence of bound agonist. In the presence of CACNG8, shows resensitization which is characterized by a delayed accumulation of current flux upon continued application of glutamate. The chain is Glutamate receptor 3 from Rattus norvegicus (Rat).